Consider the following 100-residue polypeptide: Competence protein ComGE (100 aa).

The chain crosses the membrane as a helical span at residues 15 to 35 (VILLEAVVALAIFASIATLLL).

As to quaternary structure, the transformation pili are flexible filaments, consisting mainly of the major pilin ComGC and smaller amounts of the minor pilins, including at least ComGD, ComGF and ComGG, and perhaps ComGE. Interacts with ComGD. Interacts with ComGF. Interacts with ComGG.

It localises to the cell membrane. The protein localises to the cell surface. Its function is as follows. Required for formation of the type IV-like pilus (T4P) that plays a role in transformation. Transformation pili are dynamically extended and retracted, perhaps thereby promoting DNA uptake and transformation. Involved in transformation. Required for DNA binding. This Streptococcus pneumoniae (strain ATCC BAA-255 / R6) protein is Competence protein ComGE.